The primary structure comprises 356 residues: Tyrosine recombinase XerS (356 aa).

The Core-binding (CB) domain maps to 16–121 (TMPWYILEYY…ALSSLYKYLT (106 aa)). The Tyr recombinase domain maps to 169-354 (EFLQYIDREY…VNDEQKNALN (186 aa)). Active-site residues include Arg-210, Lys-234, His-306, Arg-309, and His-332. The O-(3'-phospho-DNA)-tyrosine intermediate role is filled by Tyr-341.

It belongs to the 'phage' integrase family. XerS subfamily.

It localises to the cytoplasm. With respect to regulation, ftsK is required for recombination. In terms of biological role, site-specific tyrosine recombinase, which acts by catalyzing the cutting and rejoining of the recombining DNA molecules. Essential to convert dimers of the bacterial chromosome into monomers to permit their segregation at cell division. This Streptococcus gordonii (strain Challis / ATCC 35105 / BCRC 15272 / CH1 / DL1 / V288) protein is Tyrosine recombinase XerS.